A 532-amino-acid polypeptide reads, in one-letter code: Flavin-containing monooxygenase 3 (532 aa).

FAD is bound by residues 9–13 (GAGVS), glutamate 32, 40–41 (LW), and 61–62 (NS). NADP(+)-binding positions include 60 to 61 (TN) and 195 to 198 (SGCD). Serine 401 bears the Phosphoserine mark. The chain crosses the membrane as a helical span at residues 512 to 532 (CHLVKLFVLPVLFIAVFLALI).

The protein belongs to the FMO family. Requires FAD as cofactor.

The protein resides in the microsome membrane. It localises to the endoplasmic reticulum membrane. It catalyses the reaction trimethylamine + NADPH + O2 = trimethylamine N-oxide + NADP(+) + H2O. It carries out the reaction N,N-dimethylaniline + NADPH + O2 + H(+) = N,N-dimethylaniline N-oxide + NADP(+) + H2O. The enzyme catalyses hypotaurine + NADPH + O2 + H(+) = taurine + NADP(+) + H2O. The catalysed reaction is (S)-nicotine + NADPH + O2 = trans-(S)-nicotine N(1')-oxide + NADP(+) + H2O. It catalyses the reaction albendazole + NADPH + O2 + H(+) = albendazole S-oxide + NADP(+) + H2O. Essential hepatic enzyme that catalyzes the oxygenation of a wide variety of nitrogen- and sulfur-containing compounds including drugs as well as dietary compounds. Plays an important role in the metabolism of trimethylamine (TMA), via the production of trimethylamine N-oxide (TMAO) metabolite. TMA is generated by the action of gut microbiota using dietary precursors such as choline, choline containing compounds, betaine or L-carnitine. By regulating TMAO concentration, FMO3 directly impacts both platelet responsiveness and rate of thrombus formation. The sequence is that of Flavin-containing monooxygenase 3 (FMO3) from Canis lupus familiaris (Dog).